The primary structure comprises 332 residues: MKVTFEELKGAFYRVLRSRNIAEDTADACAEMFARTTESGVYSHGVNRFPRFIQQLDNGDIIPDAKPQRVTSLGAIEQWDAQRAIGNLTAKKMMDRAIELASDHGIGLVALRNANHWMRGGSYGWQAAERGYIGICWTNSIAVMPPWGAKECRIGTNPLIVAIPSTPITMVDMSMSMFSYGMLEVNRLAGRELPVDGGFDDNGQLTKEPGVIEKNRRILPMGYWKGSGLSIVLDMIATLLSNGSSVAEVTQENSDEYGVSQIFIAIEVDKLIDGATRDAKLQRIMDFITTAERADDNVAIRLPGHEFTKLLDDNRRHGITIDDSVWAKIQAL.

Histidine 44 serves as the catalytic Proton donor. NAD(+) is bound by residues 168–174 (ITMVDMS), 224–225 (WK), and 304–306 (GHE).

The protein belongs to the LDH2/MDH2 oxidoreductase family. DlgD subfamily. As to quaternary structure, homodimer.

Its subcellular location is the cytoplasm. The enzyme catalyses 3-dehydro-L-gulonate + NAD(+) = 2,3-dioxo-L-gulonate + NADH + H(+). The catalysed reaction is 3-dehydro-L-gulonate + NADP(+) = 2,3-dioxo-L-gulonate + NADPH + H(+). Catalyzes the reduction of 2,3-diketo-L-gulonate in the presence of NADH, to form 3-keto-L-gulonate. The polypeptide is 2,3-diketo-L-gulonate reductase (Salmonella heidelberg (strain SL476)).